A 180-amino-acid chain; its full sequence is Large ribosomal subunit protein uL16 (180 aa).

This sequence belongs to the universal ribosomal protein uL16 family.

The polypeptide is Large ribosomal subunit protein uL16 (Hyperthermus butylicus (strain DSM 5456 / JCM 9403 / PLM1-5)).